The sequence spans 153 residues: Riboflavin synthase (153 aa).

The protein belongs to the DMRL synthase family. Homooligomer. The cofactor is Mg(2+).

The catalysed reaction is 2 6,7-dimethyl-8-(1-D-ribityl)lumazine + H(+) = 5-amino-6-(D-ribitylamino)uracil + riboflavin. The protein operates within cofactor biosynthesis; riboflavin biosynthesis; riboflavin from 2-hydroxy-3-oxobutyl phosphate and 5-amino-6-(D-ribitylamino)uracil: step 2/2. Inhibited by EDTA. In terms of biological role, the relatively low activity of this enzyme suggested that 6,7-dimethyl-8-ribityllumazine might not be its natural substrate. In Methanothermobacter marburgensis (strain ATCC BAA-927 / DSM 2133 / JCM 14651 / NBRC 100331 / OCM 82 / Marburg) (Methanobacterium thermoautotrophicum), this protein is Riboflavin synthase (ribC).